We begin with the raw amino-acid sequence, 223 residues long: Urease accessory protein UreF (223 aa).

The protein belongs to the UreF family. In terms of assembly, ureD, UreF and UreG form a complex that acts as a GTP-hydrolysis-dependent molecular chaperone, activating the urease apoprotein by helping to assemble the nickel containing metallocenter of UreC. The UreE protein probably delivers the nickel.

The protein localises to the cytoplasm. Required for maturation of urease via the functional incorporation of the urease nickel metallocenter. The chain is Urease accessory protein UreF from Rhizobium etli (strain ATCC 51251 / DSM 11541 / JCM 21823 / NBRC 15573 / CFN 42).